The sequence spans 414 residues: Serine/threonine transporter SstT (414 aa).

8 consecutive transmembrane segments (helical) span residues 22–42 (GLVLGIVVALISAPLQETIGF), 54–74 (IFVKALRAVAPILIFFLVMAA), 89–109 (IIVLYLLGTFLAAFVAVIAGF), 148–168 (AIFKANFIGVLAWSIGLGLAL), 189–209 (IVHVIISFAPFGVFGLVAETL), 223–243 (LLAVLIGTMLFTAFVVNPILV), 305–325 (MAGAAITITILTLAAVHTLGL), and 337–357 (IVAALCACGASGVAGGSLLLI).

Belongs to the dicarboxylate/amino acid:cation symporter (DAACS) (TC 2.A.23) family.

It localises to the cell inner membrane. The catalysed reaction is L-serine(in) + Na(+)(in) = L-serine(out) + Na(+)(out). The enzyme catalyses L-threonine(in) + Na(+)(in) = L-threonine(out) + Na(+)(out). Involved in the import of serine and threonine into the cell, with the concomitant import of sodium (symport system). This is Serine/threonine transporter SstT from Haemophilus influenzae (strain PittGG).